A 593-amino-acid chain; its full sequence is Glutamate decarboxylase 1 (593 aa).

Over residues 1-12 the composition is skewed to low complexity; that stretch reads MASSTPSPATSS. Positions 1 to 22 are disordered; the sequence is MASSTPSPATSSNAGADPNTTN. Residue Ser77 is modified to Phosphoserine. A 4-aminobutanoate-binding site is contributed by 189–191; the sequence is QLS. Lys404 carries the N6-(pyridoxal phosphate)lysine modification. Arg566 is a binding site for 4-aminobutanoate.

The protein belongs to the group II decarboxylase family. As to quaternary structure, homodimer. Pyridoxal 5'-phosphate serves as cofactor.

It catalyses the reaction L-glutamate + H(+) = 4-aminobutanoate + CO2. Its function is as follows. Catalyzes the synthesis of the inhibitory neurotransmitter gamma-aminobutyric acid (GABA) with pyridoxal 5'-phosphate as cofactor. This is Glutamate decarboxylase 1 (Gad1) from Mus musculus (Mouse).